We begin with the raw amino-acid sequence, 231 residues long: Orotidine 5'-phosphate decarboxylase (231 aa).

Substrate is bound by residues Asp-11, Lys-33, 60–69, Thr-117, Arg-178, Gln-187, Gly-207, and Arg-208; that span reads DLKFHDIPNT. The active-site Proton donor is the Lys-62.

It belongs to the OMP decarboxylase family. Type 1 subfamily. As to quaternary structure, homodimer.

It catalyses the reaction orotidine 5'-phosphate + H(+) = UMP + CO2. Its pathway is pyrimidine metabolism; UMP biosynthesis via de novo pathway; UMP from orotate: step 2/2. In terms of biological role, catalyzes the decarboxylation of orotidine 5'-monophosphate (OMP) to uridine 5'-monophosphate (UMP). This is Orotidine 5'-phosphate decarboxylase from Nitrosomonas eutropha (strain DSM 101675 / C91 / Nm57).